The sequence spans 488 residues: Adenylosuccinate synthetase 1, chloroplastic (488 aa).

A chloroplast-targeting transit peptide spans 1–47 (MSLSTVNHAAAAAAAAAGPGKSFSAAAPAAPSVRLPRTRAPAAAAVS). Residues 75-81 (GDEGKGK) and 103-105 (GHT) contribute to the GTP site. Residue aspartate 76 is the Proton acceptor of the active site. Aspartate 76 and glycine 103 together coordinate Mg(2+). Residues 76-79 (DEGK), 101-104 (NAGH), threonine 193, arginine 207, glutamine 287, threonine 302, and arginine 366 each bind IMP. Catalysis depends on histidine 104, which acts as the Proton donor. 362–368 (TTTGRPR) provides a ligand contact to substrate. Residues arginine 368, 394-396 (KLD), and 477-479 (GVG) contribute to the GTP site.

This sequence belongs to the adenylosuccinate synthetase family. In terms of assembly, homodimer. Mg(2+) is required as a cofactor.

The protein localises to the plastid. Its subcellular location is the chloroplast. It carries out the reaction IMP + L-aspartate + GTP = N(6)-(1,2-dicarboxyethyl)-AMP + GDP + phosphate + 2 H(+). It participates in purine metabolism; AMP biosynthesis via de novo pathway; AMP from IMP: step 1/2. Its function is as follows. Plays an important role in the de novo pathway and in the salvage pathway of purine nucleotide biosynthesis. Catalyzes the first committed step in the biosynthesis of AMP from IMP. The polypeptide is Adenylosuccinate synthetase 1, chloroplastic (Oryza sativa subsp. japonica (Rice)).